The primary structure comprises 475 residues: uncharacterized protein (475 aa).

The chain crosses the membrane as a helical span at residues 19–39 (IKVGVFFVAILLILTGILLTI). 2 disordered regions span residues 55–79 (GEYHELNTSPNENSTALQPDENATS) and 330–350 (SSPFNPNRRHPVTGRIRPHKG). Polar residues predominate over residues 60–79 (LNTSPNENSTALQPDENATS). Residues 336–348 (NRRHPVTGRIRPH) show a composition bias toward basic residues. Position 348 (His348) interacts with Zn(2+).

This sequence in the central section; belongs to the OapA family. In the C-terminal section; belongs to the peptidase M23B family. It depends on Zn(2+) as a cofactor.

It localises to the cell membrane. This is an uncharacterized protein from Haemophilus influenzae (strain ATCC 51907 / DSM 11121 / KW20 / Rd).